Reading from the N-terminus, the 357-residue chain is Type II methyltransferase M1.HgaI (357 aa).

In terms of domain architecture, SAM-dependent MTase C5-type spans Ile5–Asn357. The active site involves Cys83.

The protein belongs to the class I-like SAM-binding methyltransferase superfamily. C5-methyltransferase family.

The catalysed reaction is a 2'-deoxycytidine in DNA + S-adenosyl-L-methionine = a 5-methyl-2'-deoxycytidine in DNA + S-adenosyl-L-homocysteine + H(+). Its function is as follows. A methylase that recognizes DNA with the sequence 5'-GCGTC-3', methylates C-2, and protects the DNA from cleavage by the HgaI endonuclease. This is Type II methyltransferase M1.HgaI (hgaIAM) from Avibacterium volantium (Pasteurella volantium).